We begin with the raw amino-acid sequence, 654 residues long: Bifunctional 3'-phosphoadenosine 5'-phosphosulfate synthase pps-1 (654 aa).

Positions 1–26 (MLTPRDENNEGDAMPMLKKPRYSSLS) are disordered. The segment at 1-231 (MLTPRDENNE…VLDHLESKGL (231 aa)) is adenylyl-sulfate kinase. 66-71 (GAGKTT) contacts ATP. Adenosine 5'-phosphosulfate contacts are provided by residues 93–96 (DNIR), F105, 110–113 (RQEN), 136–137 (IS), K175, and 190–191 (GF). ATP is bound by residues C218, 449–452 (QLRN), 550–554 (GRDPA), and A592. A sulfate adenylyltransferase region spans residues 242 to 653 (VRELFVSDDL…AGYYKSLQNS (412 aa)).

This sequence in the N-terminal section; belongs to the APS kinase family. In the C-terminal section; belongs to the sulfate adenylyltransferase family.

It localises to the nucleus. The enzyme catalyses sulfate + ATP + H(+) = adenosine 5'-phosphosulfate + diphosphate. The catalysed reaction is adenosine 5'-phosphosulfate + ATP = 3'-phosphoadenylyl sulfate + ADP + H(+). It participates in sulfur metabolism; sulfate assimilation. Its function is as follows. Bifunctional enzyme with both ATP sulfurylase and APS kinase activity, which mediates two steps in the sulfate activation pathway. The first step is the transfer of a sulfate group to ATP to yield adenosine 5'-phosphosulfate (APS), and the second step is the transfer of a phosphate group from ATP to APS yielding 3'-phosphoadenylylsulfate (PAPS: activated sulfate donor used by sulfotransferase). Required for normal growth and development. Involved in several aspects of both embryonic and postembryonic development, including molting, changes in cell shape, and patterning of epithelial and muscle cells. This Caenorhabditis elegans protein is Bifunctional 3'-phosphoadenosine 5'-phosphosulfate synthase pps-1.